A 151-amino-acid chain; its full sequence is Large ribosomal subunit protein bL9 (151 aa).

The protein belongs to the bacterial ribosomal protein bL9 family.

In terms of biological role, binds to the 23S rRNA. The chain is Large ribosomal subunit protein bL9 from Rhodococcus jostii (strain RHA1).